Here is a 508-residue protein sequence, read N- to C-terminus: Mevalonate kinase ERG12 (508 aa).

Positions 1-46 (MPPSNPAMVNGLNGSHANGNGNGHNHISDSGSETSGESSNGSGRRR) are disordered. The segment covering 10–42 (NGLNGSHANGNGNGHNHISDSGSETSGESSNGS) has biased composition (low complexity). ATP contacts are provided by residues lysine 68, serine 200, and 205-211 (GAGLGSS). Mg(2+) contacts are provided by serine 211 and glutamate 256. Residue aspartate 267 is the Proton acceptor of the active site.

It belongs to the GHMP kinase family. Mevalonate kinase subfamily. In terms of assembly, homodimer. Requires Mg(2+) as cofactor.

It localises to the cytoplasm. The protein resides in the cytosol. The enzyme catalyses (R)-mevalonate + ATP = (R)-5-phosphomevalonate + ADP + H(+). It participates in isoprenoid biosynthesis; isopentenyl diphosphate biosynthesis via mevalonate pathway; isopentenyl diphosphate from (R)-mevalonate: step 1/3. In terms of biological role, mevalonate kinase; part of the second module of ergosterol biosynthesis pathway that includes the middle steps of the pathway. ERG12 converts mevalonate into 5-phosphomevalonate. The second module is carried out in the vacuole and involves the formation of farnesyl diphosphate, which is also an important intermediate in the biosynthesis of ubiquinone, dolichol, heme and prenylated proteins. Activity by the mevalonate kinase ERG12 (FG05912) first converts mevalonate into 5-phosphomevalonate. 5-phosphomevalonate is then further converted to 5-diphosphomevalonate by the phosphomevalonate kinase ERG8 (FG09764). The diphosphomevalonate decarboxylase ERG19 (FG10424) then produces isopentenyl diphosphate. The isopentenyl-diphosphate delta-isomerase IDI1 (FG09722) then catalyzes the 1,3-allylic rearrangement of the homoallylic substrate isopentenyl (IPP) to its highly electrophilic allylic isomer, dimethylallyl diphosphate (DMAPP). Finally the farnesyl diphosphate synthase ERG20 (FG06784) catalyzes the sequential condensation of isopentenyl pyrophosphate with dimethylallyl pyrophosphate, and then with the resultant geranylpyrophosphate to the ultimate product farnesyl pyrophosphate. In Gibberella zeae (strain ATCC MYA-4620 / CBS 123657 / FGSC 9075 / NRRL 31084 / PH-1) (Wheat head blight fungus), this protein is Mevalonate kinase ERG12.